The following is a 538-amino-acid chain: Mitochondrial distribution and morphology protein 34 (538 aa).

Residues Met1–Gln224 form the SMP-LTD domain. 2 disordered regions span residues Ala26 to Gly55 and Asp231 to Ser251.

It belongs to the MDM34 family. Component of the ER-mitochondria encounter structure (ERMES) or MDM complex, composed of MMM1, MDM10, MDM12 and MDM34.

It is found in the mitochondrion outer membrane. Component of the ERMES/MDM complex, which serves as a molecular tether to connect the endoplasmic reticulum (ER) and mitochondria. Components of this complex are involved in the control of mitochondrial shape and protein biogenesis, and function in nonvesicular lipid trafficking between the ER and mitochondria. MDM34 is required for the interaction of the ER-resident membrane protein MMM1 and the outer mitochondrial membrane-resident beta-barrel protein MDM10. The chain is Mitochondrial distribution and morphology protein 34 from Candida glabrata (strain ATCC 2001 / BCRC 20586 / JCM 3761 / NBRC 0622 / NRRL Y-65 / CBS 138) (Yeast).